The primary structure comprises 318 residues: Probable cell division protein WhiA (318 aa).

The H-T-H motif DNA-binding region spans 276–310 (TLQELGEMVESGSISKSGINHRLRKIDQIADKIRN).

It belongs to the WhiA family.

In terms of biological role, involved in cell division and chromosome segregation. In Exiguobacterium sibiricum (strain DSM 17290 / CCUG 55495 / CIP 109462 / JCM 13490 / 255-15), this protein is Probable cell division protein WhiA.